The primary structure comprises 248 residues: Large ribosomal subunit protein uL30 (248 aa).

Met1 is subject to N-acetylmethionine. A run of 4 repeats spans residues 7 to 18 (KKKKVPAVPETL), 19 to 30 (KKKRKNFAELKI), 31 to 42 (KRLRKKFAQKML), and 43 to 54 (RKARRKLIYEKA). Positions 7–54 (KKKKVPAVPETLKKKRKNFAELKIKRLRKKFAQKMLRKARRKLIYEKA) are 4 X 12 AA tandem repeats. A Phosphothreonine modification is found at Thr17. An N6-acetyllysine modification is found at Lys124. Lys127 bears the N6-succinyllysine mark. Phosphotyrosine is present on Tyr139.

Belongs to the universal ribosomal protein uL30 family. In terms of assembly, component of the large ribosomal subunit. Homodimer. Interacts with DHX33.

The protein localises to the cytoplasm. Functionally, component of the large ribosomal subunit. The ribosome is a large ribonucleoprotein complex responsible for the synthesis of proteins in the cell. Binds to G-rich structures in 28S rRNA and in mRNAs. Plays a regulatory role in the translation apparatus; inhibits cell-free translation of mRNAs. The protein is Large ribosomal subunit protein uL30 (RPL7) of Bos taurus (Bovine).